We begin with the raw amino-acid sequence, 101 residues long: Urease subunit beta (101 aa).

Belongs to the urease beta subunit family. Heterotrimer of UreA (gamma), UreB (beta) and UreC (alpha) subunits. Three heterotrimers associate to form the active enzyme.

The protein resides in the cytoplasm. The enzyme catalyses urea + 2 H2O + H(+) = hydrogencarbonate + 2 NH4(+). Its pathway is nitrogen metabolism; urea degradation; CO(2) and NH(3) from urea (urease route): step 1/1. The sequence is that of Urease subunit beta from Ectopseudomonas mendocina (strain ymp) (Pseudomonas mendocina).